Reading from the N-terminus, the 188-residue chain is Elongation factor P (188 aa).

Lysine 34 is subject to N6-(3,6-diaminohexanoyl)-5-hydroxylysine.

Belongs to the elongation factor P family. Post-translationally, may be beta-lysylated on the epsilon-amino group of Lys-34 by the combined action of EpmA and EpmB, and then hydroxylated on the C5 position of the same residue by EpmC (if this protein is present). Lysylation is critical for the stimulatory effect of EF-P on peptide-bond formation. The lysylation moiety may extend toward the peptidyltransferase center and stabilize the terminal 3-CCA end of the tRNA. Hydroxylation of the C5 position on Lys-34 may allow additional potential stabilizing hydrogen-bond interactions with the P-tRNA.

The protein localises to the cytoplasm. Its pathway is protein biosynthesis; polypeptide chain elongation. Functionally, involved in peptide bond synthesis. Alleviates ribosome stalling that occurs when 3 or more consecutive Pro residues or the sequence PPG is present in a protein, possibly by augmenting the peptidyl transferase activity of the ribosome. Modification of Lys-34 is required for alleviation. In Serratia proteamaculans (strain 568), this protein is Elongation factor P.